Here is a 94-residue protein sequence, read N- to C-terminus: Signal peptidase complex subunit 1 (94 aa).

Ser-2 is modified (N-acetylserine). At 2–28 the chain is on the cytoplasmic side; it reads SEILQDVQRKLVFPIDFPSQRKTEKFQ. The helical transmembrane segment at 29–49 threads the bilayer; the sequence is QLSLMIGALVACILGFAQQSL. Position 50 (Lys-50) is a topological domain, lumenal. Residues 51–71 form a helical membrane-spanning segment; that stretch reads VLLTAYGISCVITLICVLPAY. The Cytoplasmic segment spans residues 72-94; sequence PWYNKQKLRWAQPKIEINVDQYD.

Belongs to the SPCS1 family. As to quaternary structure, component of the signal peptidase complex (SPC) composed of a catalytic subunit SEC11 and three accessory subunits SPC1, SPC2 and SPC3. The complex induces a local thinning of the ER membrane which is used to measure the length of the signal peptide (SP) h-region of protein substrates. This ensures the selectivity of the complex towards h-regions shorter than 18-20 amino acids. SPC associates with the translocon complex. Interacts with SBH1 and SEB2/SBH2.

It is found in the endoplasmic reticulum membrane. In terms of biological role, component of the signal peptidase complex (SPC) which catalyzes the cleavage of N-terminal signal sequences from nascent proteins as they are translocated into the lumen of the endoplasmic reticulum. Dispensable for SPC enzymatic activity. The sequence is that of Signal peptidase complex subunit 1 (SPC1) from Saccharomyces cerevisiae (strain ATCC 204508 / S288c) (Baker's yeast).